The primary structure comprises 236 residues: Transcriptional regulatory protein RprY (236 aa).

The Response regulatory domain occupies 9 to 123 (RILLCEDDEN…ELTFRIEAIL (115 aa)). At Asp-58 the chain carries 4-aspartylphosphate. Positions 134-231 (SNVYKIGKFT…IHGKGYKLIT (98 aa)) form a DNA-binding region, ompR/PhoB-type.

Post-translationally, phosphorylated by RprX.

The protein resides in the cytoplasm. Its function is as follows. Member of the two-component regulatory system RprX/RprY. In Bacteroides fragilis (strain YCH46), this protein is Transcriptional regulatory protein RprY (rprY).